A 209-amino-acid chain; its full sequence is Orotate phosphoribosyltransferase (209 aa).

5-phospho-alpha-D-ribose 1-diphosphate contacts are provided by residues R96, K100, H102, and 122–130 (EDLISTGGS). S126 contacts orotate.

This sequence belongs to the purine/pyrimidine phosphoribosyltransferase family. PyrE subfamily. Homodimer. Mg(2+) is required as a cofactor.

It carries out the reaction orotidine 5'-phosphate + diphosphate = orotate + 5-phospho-alpha-D-ribose 1-diphosphate. The protein operates within pyrimidine metabolism; UMP biosynthesis via de novo pathway; UMP from orotate: step 1/2. Catalyzes the transfer of a ribosyl phosphate group from 5-phosphoribose 1-diphosphate to orotate, leading to the formation of orotidine monophosphate (OMP). The sequence is that of Orotate phosphoribosyltransferase from Streptococcus thermophilus (strain ATCC BAA-491 / LMD-9).